The following is a 312-amino-acid chain: Ribonuclease Z (312 aa).

Zn(2+) contacts are provided by H62, H64, D66, H67, H144, D215, and H273. Residue D66 is the Proton acceptor of the active site.

The protein belongs to the RNase Z family. In terms of assembly, homodimer. The cofactor is Zn(2+).

The catalysed reaction is Endonucleolytic cleavage of RNA, removing extra 3' nucleotides from tRNA precursor, generating 3' termini of tRNAs. A 3'-hydroxy group is left at the tRNA terminus and a 5'-phosphoryl group is left at the trailer molecule.. Zinc phosphodiesterase, which displays some tRNA 3'-processing endonuclease activity. Probably involved in tRNA maturation, by removing a 3'-trailer from precursor tRNA. This Prochlorococcus marinus subsp. pastoris (strain CCMP1986 / NIES-2087 / MED4) protein is Ribonuclease Z.